Here is a 431-residue protein sequence, read N- to C-terminus: Glutamate-1-semialdehyde 2,1-aminomutase (431 aa).

Lysine 269 is subject to N6-(pyridoxal phosphate)lysine.

The protein belongs to the class-III pyridoxal-phosphate-dependent aminotransferase family. HemL subfamily. As to quaternary structure, homodimer. It depends on pyridoxal 5'-phosphate as a cofactor.

The protein resides in the cytoplasm. The enzyme catalyses (S)-4-amino-5-oxopentanoate = 5-aminolevulinate. Its pathway is porphyrin-containing compound metabolism; protoporphyrin-IX biosynthesis; 5-aminolevulinate from L-glutamyl-tRNA(Glu): step 2/2. The chain is Glutamate-1-semialdehyde 2,1-aminomutase from Francisella tularensis subsp. tularensis (strain SCHU S4 / Schu 4).